We begin with the raw amino-acid sequence, 98 residues long: Histone H4-1 (98 aa).

The segment covering 1–14 has biased composition (gly residues); that stretch reads MGGKGGKGGKGLGK. The tract at residues 1–20 is disordered; it reads MGGKGGKGGKGLGKVGAKKR.

It belongs to the histone H4 family. The nucleosome is a histone octamer containing two molecules each of H2A, H2B, H3 and H4 assembled in one H3-H4 heterotetramer and two H2A-H2B heterodimers. The octamer wraps approximately 147 bp of DNA.

It is found in the nucleus. The protein resides in the chromosome. Functionally, core component of nucleosome. Nucleosomes wrap and compact DNA into chromatin, limiting DNA accessibility to the cellular machineries which require DNA as a template. Histones thereby play a central role in transcription regulation, DNA repair, DNA replication and chromosomal stability. DNA accessibility is regulated via a complex set of post-translational modifications of histones, also called histone code, and nucleosome remodeling. The polypeptide is Histone H4-1 (Blepharisma japonicum).